We begin with the raw amino-acid sequence, 205 residues long: Octanoyltransferase (205 aa).

The 176-residue stretch at 30-205 (NSADELVWLL…ILKKEFYKIF (176 aa)) folds into the BPL/LPL catalytic domain. Substrate is bound by residues 68-75 (RGGKHTYH), 140-142 (AFG), and 153-155 (GIA). Cys171 acts as the Acyl-thioester intermediate in catalysis.

This sequence belongs to the LipB family.

The protein localises to the cytoplasm. It catalyses the reaction octanoyl-[ACP] + L-lysyl-[protein] = N(6)-octanoyl-L-lysyl-[protein] + holo-[ACP] + H(+). Its pathway is protein modification; protein lipoylation via endogenous pathway; protein N(6)-(lipoyl)lysine from octanoyl-[acyl-carrier-protein]: step 1/2. Catalyzes the transfer of endogenously produced octanoic acid from octanoyl-acyl-carrier-protein onto the lipoyl domains of lipoate-dependent enzymes. Lipoyl-ACP can also act as a substrate although octanoyl-ACP is likely to be the physiological substrate. The sequence is that of Octanoyltransferase from Wolbachia pipientis wMel.